The primary structure comprises 278 residues: Small ribosomal subunit protein uS2 (278 aa).

Residues 235–278 are disordered; the sequence is AEAAEEAPKRERKAKAAVKKERTKKEDDDALNANVAGKFAKDEE. Residues 252–261 show a composition bias toward basic and acidic residues; sequence VKKERTKKED.

The protein belongs to the universal ribosomal protein uS2 family.

The sequence is that of Small ribosomal subunit protein uS2 from Parabacteroides distasonis (strain ATCC 8503 / DSM 20701 / CIP 104284 / JCM 5825 / NCTC 11152).